A 649-amino-acid polypeptide reads, in one-letter code: DNA mismatch repair protein MutL (649 aa).

Belongs to the DNA mismatch repair MutL/HexB family.

In terms of biological role, this protein is involved in the repair of mismatches in DNA. It is required for dam-dependent methyl-directed DNA mismatch repair. May act as a 'molecular matchmaker', a protein that promotes the formation of a stable complex between two or more DNA-binding proteins in an ATP-dependent manner without itself being part of a final effector complex. This chain is DNA mismatch repair protein MutL, found in Streptococcus pneumoniae (strain JJA).